The sequence spans 525 residues: Serine/threonine-protein kinase YPK3 (525 aa).

Residues Ser-90 and Ser-105 each carry the phosphoserine modification. The residue at position 107 (Thr-107) is a Phosphothreonine. In terms of domain architecture, Protein kinase spans 128–424 (FKPVRVLGQG…KTGANNKPTK (297 aa)). Residues 134 to 142 (LGQGAYGKV) and Lys-157 contribute to the ATP site. The interval 170–193 (ATDSKREDEDKNDGNNNDNDDGLS) is disordered. The segment covering 172–182 (DSKREDEDKND) has biased composition (basic and acidic residues). The Proton acceptor role is filled by Asp-277. Ser-321 bears the Phosphoserine; by PKH1 or PKH2 mark. In terms of domain architecture, AGC-kinase C-terminal spans 445–524 (RKIDWKLLES…KASGSYLEKY (80 aa)). Thr-490 is subject to Phosphothreonine; by TORC1. Phosphoserine; by TORC1 is present on Ser-513.

It belongs to the protein kinase superfamily. AGC Ser/Thr protein kinase family. S6 kinase subfamily. Post-translationally, phosphorylated by PKA in a TORC1-dependent manner. Phosphorylation at PKA consensus sites RRxS/T decreases upon rapamycin treatment.

It localises to the cytoplasm. It catalyses the reaction L-seryl-[protein] + ATP = O-phospho-L-seryl-[protein] + ADP + H(+). The enzyme catalyses L-threonyl-[protein] + ATP = O-phospho-L-threonyl-[protein] + ADP + H(+). Functionally, AGC kinase which plays a role in TOR complex 1 (TORC1) signaling pathway which mediates temporal control of cell growth in response to nutrients. Required for phosphorylation of ribosomal protein S6 (RPS6A/RPS6B) at 'Ser-232' and 'Ser-233'. The chain is Serine/threonine-protein kinase YPK3 from Saccharomyces cerevisiae (strain ATCC 204508 / S288c) (Baker's yeast).